Reading from the N-terminus, the 419-residue chain is Carbohydrate sulfotransferase 12 (419 aa).

Residues 1-5 (MTKPR) are Cytoplasmic-facing. A helical; Signal-anchor for type II membrane protein membrane pass occupies residues 6–26 (LFRLWLVLGSALMILLIIVYW). The Lumenal segment spans residues 27-419 (DNVGTAHFYL…YPKPENLLRD (393 aa)). The segment covering 78 to 87 (HNDLSRRKTE) has biased composition (basic and acidic residues). The disordered stretch occupies residues 78–99 (HNDLSRRKTEQPPVPAPSKPVL). A glycan (N-linked (GlcNAc...) asparagine) is linked at N139. 176 to 182 (PKVACTN) contacts 3'-phosphoadenylyl sulfate. An N-linked (GlcNAc...) asparagine glycan is attached at N214. Residue 250-258 (RDPFVRLIS) participates in 3'-phosphoadenylyl sulfate binding. N-linked (GlcNAc...) asparagine glycans are attached at residues N285 and N375.

This sequence belongs to the sulfotransferase 2 family.

Its subcellular location is the golgi apparatus membrane. The enzyme catalyses chondroitin beta-D-glucuronate + n 3'-phosphoadenylyl sulfate = chondroitin 4'-sulfate + n adenosine 3',5'-bisphosphate + n H(+). Catalyzes the transfer of sulfate to position 4 of the N-acetylgalactosamine (GalNAc) residue of chondroitin and desulfated dermatan sulfate. Chondroitin sulfate constitutes the predominant proteoglycan present in cartilage and is distributed on the surfaces of many cells and extracellular matrices. Activity toward partially desulfated dermatan sulfate is however lower. Does not form 4, 6-di-O-sulfated GalNAc when chondroitin sulfate C is used as an acceptor. This chain is Carbohydrate sulfotransferase 12 (Chst12), found in Mus musculus (Mouse).